The chain runs to 250 residues: MSGHSKWATIKRKKSATDQKRGNLFTKLVKEITIAAKMGGGDPAGNPRLRLAIDTARSNSMPMDNIQRAIKKGTGELEGVSYDEITYEGYGPAGIALIIETATDNKNRTVADLRHIMSRNNGSLGENGSVSWMFHRKGSIEVPGGSATEEQLMEVLLDAGLEDIGGDAEGGYTVTTDVHDLESAKKALEEAGIAYENAKMDLIPENFIELEADDARKVIKLIDALEGNDDIQAVFSNMEISEGAMDSLDE.

This sequence belongs to the TACO1 family.

The protein resides in the cytoplasm. This is Probable transcriptional regulatory protein Cvib_1432 from Chlorobium phaeovibrioides (strain DSM 265 / 1930) (Prosthecochloris vibrioformis (strain DSM 265)).